Here is a 162-residue protein sequence, read N- to C-terminus: Cyclic pyranopterin monophosphate synthase (162 aa).

Substrate contacts are provided by residues 75-77 and 113-114; these read LCH and ME. The active site involves Asp-128.

Belongs to the MoaC family. Homohexamer; trimer of dimers.

It catalyses the reaction (8S)-3',8-cyclo-7,8-dihydroguanosine 5'-triphosphate = cyclic pyranopterin phosphate + diphosphate. It participates in cofactor biosynthesis; molybdopterin biosynthesis. Its function is as follows. Catalyzes the conversion of (8S)-3',8-cyclo-7,8-dihydroguanosine 5'-triphosphate to cyclic pyranopterin monophosphate (cPMP). This Burkholderia vietnamiensis (strain G4 / LMG 22486) (Burkholderia cepacia (strain R1808)) protein is Cyclic pyranopterin monophosphate synthase.